The following is a 272-amino-acid chain: 3-methyl-2-oxobutanoate hydroxymethyltransferase (272 aa).

Residues D43 and D82 each coordinate Mg(2+). Residues 43 to 44, D82, and K112 each bind 3-methyl-2-oxobutanoate; that span reads DS. Residue E114 coordinates Mg(2+). The active-site Proton acceptor is E179.

The protein belongs to the PanB family. In terms of assembly, homodecamer; pentamer of dimers. Mg(2+) serves as cofactor.

The protein localises to the cytoplasm. It catalyses the reaction 3-methyl-2-oxobutanoate + (6R)-5,10-methylene-5,6,7,8-tetrahydrofolate + H2O = 2-dehydropantoate + (6S)-5,6,7,8-tetrahydrofolate. It functions in the pathway cofactor biosynthesis; (R)-pantothenate biosynthesis; (R)-pantoate from 3-methyl-2-oxobutanoate: step 1/2. Catalyzes the reversible reaction in which hydroxymethyl group from 5,10-methylenetetrahydrofolate is transferred onto alpha-ketoisovalerate to form ketopantoate. The protein is 3-methyl-2-oxobutanoate hydroxymethyltransferase of Staphylococcus aureus (strain Mu3 / ATCC 700698).